A 220-amino-acid polypeptide reads, in one-letter code: MFQLLIPLLLALKGHAQDNPENVQCGHRPAFPNSSWLPFHERLQVQNGECPWQVSIQMSRKHLCGGSILHWWWVLTAAHCFRRTLLDMAVVNVTVVMGTRTFSNIHSERKQVQKEEERTWDWCWMAQWVTTNGYDQYDDLNMHLEKLRVVQISRKECAKRINQLSRNMICAWNEPGTNGIFKVLTPAQPPPPSRETVGHLWFVLFMEPRDSSKWVSSVGA.

An N-terminal signal peptide occupies residues 1 to 16; sequence MFQLLIPLLLALKGHA. The Peptidase S1 domain occupies 23 to 220; it reads VQCGHRPAFP…SSKWVSSVGA (198 aa). N-linked (GlcNAc...) asparagine glycosylation occurs at Asn33. The cysteines at positions 64 and 80 are disulfide-linked. The N-linked (GlcNAc...) asparagine glycan is linked to Asn92. The cysteines at positions 157 and 170 are disulfide-linked.

It belongs to the peptidase S1 family.

It localises to the secreted. This is Serine protease-like protein 51 from Homo sapiens (Human).